We begin with the raw amino-acid sequence, 227 residues long: Cytochrome c oxidase subunit 2 (227 aa).

At 1-14 (MPYPLQLGFQDATS) the chain is on the mitochondrial intermembrane side. The chain crosses the membrane as a helical span at residues 15–45 (PIMEELLHFHDHTLMIVFLISSLVLYIITLM). Topologically, residues 46–59 (LTTKLTHTSTMDAQ) are mitochondrial matrix. Residues 60–87 (EVETVWTILPAVILILIALPSLRILYMM) form a helical membrane-spanning segment. Residues 88 to 227 (DEINNPLLTI…HFEDWSTSML (140 aa)) are Mitochondrial intermembrane-facing. 6 residues coordinate Cu cation: His161, Cys196, Glu198, Cys200, His204, and Met207. Position 198 (Glu198) interacts with Mg(2+).

Belongs to the cytochrome c oxidase subunit 2 family. In terms of assembly, component of the cytochrome c oxidase (complex IV, CIV), a multisubunit enzyme composed of 14 subunits. The complex is composed of a catalytic core of 3 subunits MT-CO1, MT-CO2 and MT-CO3, encoded in the mitochondrial DNA, and 11 supernumerary subunits COX4I, COX5A, COX5B, COX6A, COX6B, COX6C, COX7A, COX7B, COX7C, COX8 and NDUFA4, which are encoded in the nuclear genome. The complex exists as a monomer or a dimer and forms supercomplexes (SCs) in the inner mitochondrial membrane with NADH-ubiquinone oxidoreductase (complex I, CI) and ubiquinol-cytochrome c oxidoreductase (cytochrome b-c1 complex, complex III, CIII), resulting in different assemblies (supercomplex SCI(1)III(2)IV(1) and megacomplex MCI(2)III(2)IV(2)). Found in a complex with TMEM177, COA6, COX18, COX20, SCO1 and SCO2. Interacts with TMEM177 in a COX20-dependent manner. Interacts with COX20. Interacts with COX16. Cu cation serves as cofactor.

It localises to the mitochondrion inner membrane. The enzyme catalyses 4 Fe(II)-[cytochrome c] + O2 + 8 H(+)(in) = 4 Fe(III)-[cytochrome c] + 2 H2O + 4 H(+)(out). Its function is as follows. Component of the cytochrome c oxidase, the last enzyme in the mitochondrial electron transport chain which drives oxidative phosphorylation. The respiratory chain contains 3 multisubunit complexes succinate dehydrogenase (complex II, CII), ubiquinol-cytochrome c oxidoreductase (cytochrome b-c1 complex, complex III, CIII) and cytochrome c oxidase (complex IV, CIV), that cooperate to transfer electrons derived from NADH and succinate to molecular oxygen, creating an electrochemical gradient over the inner membrane that drives transmembrane transport and the ATP synthase. Cytochrome c oxidase is the component of the respiratory chain that catalyzes the reduction of oxygen to water. Electrons originating from reduced cytochrome c in the intermembrane space (IMS) are transferred via the dinuclear copper A center (CU(A)) of subunit 2 and heme A of subunit 1 to the active site in subunit 1, a binuclear center (BNC) formed by heme A3 and copper B (CU(B)). The BNC reduces molecular oxygen to 2 water molecules using 4 electrons from cytochrome c in the IMS and 4 protons from the mitochondrial matrix. In Dasypus novemcinctus (Nine-banded armadillo), this protein is Cytochrome c oxidase subunit 2 (MT-CO2).